A 117-amino-acid polypeptide reads, in one-letter code: Nascent polypeptide-associated complex protein (117 aa).

In terms of domain architecture, NAC-A/B spans Pro-9 to Met-77.

This sequence belongs to the NAC-alpha family. In terms of assembly, homodimer. Interacts with the ribosome. Binds ribosomal RNA.

In terms of biological role, contacts the emerging nascent chain on the ribosome. The chain is Nascent polypeptide-associated complex protein from Methanothermobacter thermautotrophicus (strain ATCC 29096 / DSM 1053 / JCM 10044 / NBRC 100330 / Delta H) (Methanobacterium thermoautotrophicum).